The chain runs to 275 residues: Large ribosomal subunit protein uL2 (275 aa).

The interval 220-275 (VRGAAMNPRDHPHGGGEGRAPRGMPTPKTKWGKPARGVKTRHNPRTDPFIIRRRTR) is disordered. A compositionally biased stretch (basic and acidic residues) spans 227–239 (PRDHPHGGGEGRA). Basic residues predominate over residues 249–262 (KWGKPARGVKTRHN).

This sequence belongs to the universal ribosomal protein uL2 family. In terms of assembly, part of the 50S ribosomal subunit. Forms a bridge to the 30S subunit in the 70S ribosome.

Its function is as follows. One of the primary rRNA binding proteins. Required for association of the 30S and 50S subunits to form the 70S ribosome, for tRNA binding and peptide bond formation. It has been suggested to have peptidyltransferase activity; this is somewhat controversial. Makes several contacts with the 16S rRNA in the 70S ribosome. This Roseiflexus sp. (strain RS-1) protein is Large ribosomal subunit protein uL2.